A 566-amino-acid chain; its full sequence is Mannitol 2-dehydrogenase (566 aa).

106–117 (IVHVGVGGFHRA) is an NAD(+) binding site.

This sequence belongs to the mannitol dehydrogenase family. In terms of assembly, monomer.

The catalysed reaction is D-mannitol + NAD(+) = D-fructose + NADH + H(+). Catalyzes the NAD(H)-dependent interconversion of D-fructose and D-mannitol in the mannitol metabolic pathway. This is Mannitol 2-dehydrogenase from Pyrenophora tritici-repentis (strain Pt-1C-BFP) (Wheat tan spot fungus).